A 194-amino-acid chain; its full sequence is 22 kDa relaxation protein (194 aa).

This protein is probably required for relaxation complex formation. The chain is 22 kDa relaxation protein from Salmonella typhimurium.